Reading from the N-terminus, the 81-residue chain is Neurotoxin LmNaTx11.1 (81 aa).

The N-terminal stretch at 1–18 (MKIVIIFFIAMMAVGVYS) is a signal peptide. The region spanning 19–80 (KDGYLVKKNG…PTYPSSKTCS (62 aa)) is the LCN-type CS-alpha/beta domain. Intrachain disulfides connect cysteine 29–cysteine 79, cysteine 33–cysteine 56, cysteine 42–cysteine 61, and cysteine 46–cysteine 63.

Belongs to the long (4 C-C) scorpion toxin superfamily. Sodium channel inhibitor family. Beta subfamily. Expressed by the venom gland.

The protein resides in the secreted. Functionally, binds voltage-independently at site-4 of sodium channels (Nav) and shift the voltage of activation toward more negative potentials thereby affecting sodium channel activation and promoting spontaneous and repetitive firing. The chain is Neurotoxin LmNaTx11.1 from Lychas mucronatus (Chinese swimming scorpion).